Reading from the N-terminus, the 226-residue chain is Urease accessory protein UreE (226 aa).

Residues 192–226 (PHGSGLHIHSIHSHGDGHSHDHDHSHGDHDSDHKH) form a disordered region. Positions 204-226 (SHGDGHSHDHDHSHGDHDSDHKH) are enriched in basic and acidic residues.

The protein belongs to the UreE family.

It localises to the cytoplasm. Its function is as follows. Involved in urease metallocenter assembly. Binds nickel. Probably functions as a nickel donor during metallocenter assembly. This Yersinia intermedia protein is Urease accessory protein UreE.